The following is a 147-amino-acid chain: Small ribosomal subunit protein uS12 (147 aa).

Belongs to the universal ribosomal protein uS12 family. In terms of assembly, part of the 30S ribosomal subunit.

In terms of biological role, with S4 and S5 plays an important role in translational accuracy. Located at the interface of the 30S and 50S subunits. The polypeptide is Small ribosomal subunit protein uS12 (Hyperthermus butylicus (strain DSM 5456 / JCM 9403 / PLM1-5)).